Consider the following 168-residue polypeptide: Nuclear cap-binding protein subunit 2 (168 aa).

MRNA-binding positions include Tyr23, Tyr46, 115-119 (RTDWD), 126-130 (RQYGR), and 136-137 (QV). The 79-residue stretch at 43-121 (STLYVGNLSF…RIVRTDWDAG (79 aa)) folds into the RRM domain.

It belongs to the RRM NCBP2 family. In terms of assembly, component of the nuclear cap-binding complex (CBC), a heterodimer composed of NCBP1/CBP80 and NCBP2/CBP20 that interacts with m7GpppG-capped RNA.

The protein localises to the nucleus. It localises to the cytoplasm. Component of the cap-binding complex (CBC), which binds co-transcriptionally to the 5' cap of pre-mRNAs and is involved in various processes such as pre-mRNA splicing, translation regulation, nonsense-mediated mRNA decay, RNA-mediated gene silencing (RNAi) by microRNAs (miRNAs) and mRNA export. The CBC complex is involved in mRNA export from the nucleus, leading to the recruitment of the mRNA export machinery to the 5' end of mRNA and to mRNA export in a 5' to 3' direction through the nuclear pore. The CBC complex is also involved in mediating U snRNA and intronless mRNAs export from the nucleus. The CBC complex is essential for a pioneer round of mRNA translation, before steady state translation when the CBC complex is replaced by cytoplasmic cap-binding protein eIF4E. The pioneer round of mRNA translation mediated by the CBC complex plays a central role in nonsense-mediated mRNA decay (NMD), NMD only taking place in mRNAs bound to the CBC complex, but not on eIF4E-bound mRNAs. The CBC complex enhances NMD in mRNAs containing at least one exon-junction complex (EJC), promoting the interaction between UPF1 and UPF2. The CBC complex is also involved in 'failsafe' NMD, which is independent of the EJC complex, while it does not participate in Staufen-mediated mRNA decay (SMD). During cell proliferation, the CBC complex is also involved in microRNAs (miRNAs) biogenesis via its interaction with SRRT/ARS2, thereby being required for miRNA-mediated RNA interference. The CBC complex also acts as a negative regulator of PARN, thereby acting as an inhibitor of mRNA deadenylation. In the CBC complex, NCBP2/CBP20 recognizes and binds capped RNAs (m7GpppG-capped RNA) but requires NCBP1/CBP80 to stabilize the movement of its N-terminal loop and lock the CBC into a high affinity cap-binding state with the cap structure. The conventional cap-binding complex with NCBP2 binds both small nuclear RNA (snRNA) and messenger (mRNA) and is involved in their export from the nucleus. The sequence is that of Nuclear cap-binding protein subunit 2 (NCBP2) from Gallus gallus (Chicken).